The primary structure comprises 392 residues: Tryptophan synthase beta chain 1 (392 aa).

At Lys-85 the chain carries N6-(pyridoxal phosphate)lysine.

This sequence belongs to the TrpB family. In terms of assembly, tetramer of two alpha and two beta chains. Requires pyridoxal 5'-phosphate as cofactor.

The catalysed reaction is (1S,2R)-1-C-(indol-3-yl)glycerol 3-phosphate + L-serine = D-glyceraldehyde 3-phosphate + L-tryptophan + H2O. Its pathway is amino-acid biosynthesis; L-tryptophan biosynthesis; L-tryptophan from chorismate: step 5/5. The beta subunit is responsible for the synthesis of L-tryptophan from indole and L-serine. The protein is Tryptophan synthase beta chain 1 (trpB1) of Methanothermobacter thermautotrophicus (strain ATCC 29096 / DSM 1053 / JCM 10044 / NBRC 100330 / Delta H) (Methanobacterium thermoautotrophicum).